Here is a 152-residue protein sequence, read N- to C-terminus: Deoxyuridine 5'-triphosphate nucleotidohydrolase (152 aa).

Residues 72 to 74 (RSG), Asn-85, and 89 to 91 (TVD) contribute to the substrate site.

It belongs to the dUTPase family. Mg(2+) serves as cofactor.

The catalysed reaction is dUTP + H2O = dUMP + diphosphate + H(+). Its pathway is pyrimidine metabolism; dUMP biosynthesis; dUMP from dCTP (dUTP route): step 2/2. Its function is as follows. This enzyme is involved in nucleotide metabolism: it produces dUMP, the immediate precursor of thymidine nucleotides and it decreases the intracellular concentration of dUTP so that uracil cannot be incorporated into DNA. The polypeptide is Deoxyuridine 5'-triphosphate nucleotidohydrolase (Nitrobacter winogradskyi (strain ATCC 25391 / DSM 10237 / CIP 104748 / NCIMB 11846 / Nb-255)).